A 151-amino-acid chain; its full sequence is Ribosome maturation factor RimP (151 aa).

Belongs to the RimP family.

The protein localises to the cytoplasm. Its function is as follows. Required for maturation of 30S ribosomal subunits. The chain is Ribosome maturation factor RimP from Caldicellulosiruptor saccharolyticus (strain ATCC 43494 / DSM 8903 / Tp8T 6331).